The following is a 134-amino-acid chain: Protein OPG030 (134 aa).

One can recognise a BACK domain in the interval tyrosine 88–isoleucine 133.

Belongs to the orthopoxvirus OPG030 family.

This is Protein OPG030 (OPG30) from Variola virus (isolate Human/India/Ind3/1967) (VARV).